A 269-amino-acid polypeptide reads, in one-letter code: Troponin I (269 aa).

A disordered region spans residues Met1 to Arg104. Residue Ala2 is modified to N-acetylalanine. A compositionally biased stretch (low complexity) spans Ala9 to Pro50. Over residues Asp56 to Lys91 the composition is skewed to basic and acidic residues. The troponin T-interaction stretch occupies residues Glu162 to Lys171. Positions Asn189–Pro202 are actin-binding. Residues Lys201 and Lys205 each carry the N6,N6,N6-trimethyllysine modification. The segment at Thr239–Ala269 is disordered.

This sequence belongs to the troponin I family. As to quaternary structure, binds to actin and tropomyosin. In terms of tissue distribution, all isoforms are expressed in somatic muscle. Isoforms containing exon 6a1 (isoforms 1 and 2) are expressed in all muscles but highest expression is in abdominal muscle and splanchnic muscle of the gut. Isoforms containing exon 6b1 (isoforms 5, 6, 9 and 10) are highly expressed in the tergal depressor of trochanter (TDT) muscle.

Its function is as follows. Troponin I is the ATPase inhibitory subunit of troponin in the thin filament regulatory complex. Involved in the development and maintenance of muscle and nervous system. May also be involved in the cytoskeletal apparatus. This Drosophila melanogaster (Fruit fly) protein is Troponin I (wupA).